Here is a 476-residue protein sequence, read N- to C-terminus: Bifunctional protein HldE (476 aa).

The segment at 1 to 318 (MKPILPDYNS…AEAVHGSQDT (318 aa)) is ribokinase. An ATP-binding site is contributed by 195–198 (NMKE). Residue D264 is part of the active site. A cytidylyltransferase region spans residues 344 to 476 (MTNGCFDILH…IINAIKGGKG (133 aa)).

The protein in the N-terminal section; belongs to the carbohydrate kinase PfkB family. In the C-terminal section; belongs to the cytidylyltransferase family. As to quaternary structure, homodimer.

The catalysed reaction is D-glycero-beta-D-manno-heptose 7-phosphate + ATP = D-glycero-beta-D-manno-heptose 1,7-bisphosphate + ADP + H(+). It carries out the reaction D-glycero-beta-D-manno-heptose 1-phosphate + ATP + H(+) = ADP-D-glycero-beta-D-manno-heptose + diphosphate. Its pathway is nucleotide-sugar biosynthesis; ADP-L-glycero-beta-D-manno-heptose biosynthesis; ADP-L-glycero-beta-D-manno-heptose from D-glycero-beta-D-manno-heptose 7-phosphate: step 1/4. It participates in nucleotide-sugar biosynthesis; ADP-L-glycero-beta-D-manno-heptose biosynthesis; ADP-L-glycero-beta-D-manno-heptose from D-glycero-beta-D-manno-heptose 7-phosphate: step 3/4. It functions in the pathway bacterial outer membrane biogenesis; LPS core biosynthesis. In terms of biological role, catalyzes the phosphorylation of D-glycero-D-manno-heptose 7-phosphate at the C-1 position to selectively form D-glycero-beta-D-manno-heptose-1,7-bisphosphate. Catalyzes the ADP transfer from ATP to D-glycero-beta-D-manno-heptose 1-phosphate, yielding ADP-D-glycero-beta-D-manno-heptose. The chain is Bifunctional protein HldE from Vibrio parahaemolyticus serotype O3:K6 (strain RIMD 2210633).